Reading from the N-terminus, the 258-residue chain is MKKINLAISGCLGRMGQQLIKSSKNNKNFKLTALTENKAISKKIAGIKLDVNTEQTFKKTDVIIDFTVPNCTLDILKIASKLKKRVVIGTTGFNQKEEALIKKFSKTIPILKAGNMSLGVNLLMYLTEITSKSLNEEYLSKVFEVHHKHKKDYPSGTALMLGKGIADGKNKNLYNLMGKKFLNKKSFPYGKKINFNSIRKGEIIGEHEVTFSSGKEIIKLNHEAFDRALYSDGALTAAKWLINKKPGLYSMRDLLNFR.

10 to 15 serves as a coordination point for NAD(+); that stretch reads GCLGRM. Residue Lys-38 participates in NADP(+) binding. NAD(+)-binding positions include 89 to 91 and 113 to 116; these read GTT and AGNM. Residue His-146 is the Proton donor/acceptor of the active site. His-147 is a (S)-2,3,4,5-tetrahydrodipicolinate binding site. Catalysis depends on Lys-150, which acts as the Proton donor. A (S)-2,3,4,5-tetrahydrodipicolinate-binding site is contributed by 156–157; it reads GT.

The protein belongs to the DapB family.

It localises to the cytoplasm. The enzyme catalyses (S)-2,3,4,5-tetrahydrodipicolinate + NAD(+) + H2O = (2S,4S)-4-hydroxy-2,3,4,5-tetrahydrodipicolinate + NADH + H(+). It carries out the reaction (S)-2,3,4,5-tetrahydrodipicolinate + NADP(+) + H2O = (2S,4S)-4-hydroxy-2,3,4,5-tetrahydrodipicolinate + NADPH + H(+). It participates in amino-acid biosynthesis; L-lysine biosynthesis via DAP pathway; (S)-tetrahydrodipicolinate from L-aspartate: step 4/4. Catalyzes the conversion of 4-hydroxy-tetrahydrodipicolinate (HTPA) to tetrahydrodipicolinate. This chain is 4-hydroxy-tetrahydrodipicolinate reductase, found in Pelagibacter ubique (strain HTCC1062).